The primary structure comprises 339 residues: MDHLPQLVAEARAAIESAEDVQSLDEVRVRYLGKKGEITALLKGLGKLPAEERPKAGEQINDAKQVLSDELEARKKHLQDAELNARLAQERIDVTLPGRGEPTGGLHPVTRTLERIESLFAHIGFDVAVGPELEDDYHNFEALNIPAHHPARGMADTFYFDASRLLRTHTSPVQVRTMKEQAPPIRIVCPGRVYRSDSDLTHTPMFHQVEGLLVDEDVSFADLKGTIEDFLKAFFERESLSVRFRPSYFPFTEPSAEVDIQCVMCGGDGCRVCSHSGWLEVMGCGMVHPEVFRHSGIDAERYTGFAFGMGAERLTMLRYGVNDLRLFFENDLRFLRQFG.

Glu-253 serves as a coordination point for Mg(2+).

This sequence belongs to the class-II aminoacyl-tRNA synthetase family. Phe-tRNA synthetase alpha subunit type 1 subfamily. In terms of assembly, tetramer of two alpha and two beta subunits. Mg(2+) is required as a cofactor.

It is found in the cytoplasm. The catalysed reaction is tRNA(Phe) + L-phenylalanine + ATP = L-phenylalanyl-tRNA(Phe) + AMP + diphosphate + H(+). The protein is Phenylalanine--tRNA ligase alpha subunit of Chromohalobacter salexigens (strain ATCC BAA-138 / DSM 3043 / CIP 106854 / NCIMB 13768 / 1H11).